Consider the following 500-residue polypeptide: Protein DETOXIFICATION 29 (500 aa).

12 helical membrane passes run glycine 67–valine 87, valine 91–cysteine 111, valine 132–leucine 152, isoleucine 161–isoleucine 181, valine 197–isoleucine 217, leucine 227–phenylalanine 247, alanine 277–leucine 297, isoleucine 302–isoleucine 322, leucine 349–phenylalanine 369, isoleucine 393–glycine 413, valine 419–leucine 439, and glycine 449–isoleucine 469.

The protein belongs to the multi antimicrobial extrusion (MATE) (TC 2.A.66.1) family.

The protein localises to the vacuole membrane. This Arabidopsis thaliana (Mouse-ear cress) protein is Protein DETOXIFICATION 29.